A 122-amino-acid chain; its full sequence is Large ribosomal subunit protein uL14 (122 aa).

The protein belongs to the universal ribosomal protein uL14 family. In terms of assembly, part of the 50S ribosomal subunit. Forms a cluster with proteins L3 and L19. In the 70S ribosome, L14 and L19 interact and together make contacts with the 16S rRNA in bridges B5 and B8.

Binds to 23S rRNA. Forms part of two intersubunit bridges in the 70S ribosome. The polypeptide is Large ribosomal subunit protein uL14 (Acidiphilium cryptum (strain JF-5)).